Reading from the N-terminus, the 179-residue chain is Large ribosomal subunit protein bL9 (179 aa).

The interval 155–179 (KPEEAPVPVAEEPTAETEQAEVAAE) is disordered. Positions 167-179 (PTAETEQAEVAAE) are enriched in acidic residues.

It belongs to the bacterial ribosomal protein bL9 family.

Functionally, binds to the 23S rRNA. The sequence is that of Large ribosomal subunit protein bL9 from Porphyromonas gingivalis (strain ATCC BAA-308 / W83).